The primary structure comprises 378 residues: MAVEMASQSQVLVEEKSSVRILTLNRPKQLNALSFHMISRLLQLFLAFEEDPSVKLVILKGHGRAFCAGGDVAAVVRDINQGNWRLGANYFSSEYMLNYVMATYSKAQVSILNGIVMGGGAGVSVHGRFRIATENTVFAMPETALGLFPDVGASYFLSRLPGFFGEYVGLTGARLDGAEMLACGLATHFVPSTRLTALEADLCRINSNDPTFASTILDAYTQHPRLKQQSAYRRLDVIDRCFSRRTVEEIISALEREATQEADGWISATIQALKKGSPASLKISLRSIREGRLQGVGQCLIREYRMVCHVMKGEISKDFVEGCRAILVDKDKNPKWEPRRLEDMKDSMVEQYFERVEREDDLKLPPRNNLPALGIAKL.

Residue Ala-2 is modified to N-acetylalanine. 4 residues coordinate substrate: Glu-94, Gly-119, Glu-142, and Asp-150.

It belongs to the enoyl-CoA hydratase/isomerase family. In terms of tissue distribution, expressed in roots, leaves, flowers and siliques.

The protein localises to the peroxisome. The catalysed reaction is 3-hydroxy-2-methylpropanoyl-CoA + H2O = 3-hydroxy-2-methylpropanoate + CoA + H(+). It functions in the pathway amino-acid degradation; L-valine degradation. Inhibited by copper. Its function is as follows. Involved in valine catabolism. May be indirectly involved in benzoic acid biosynthesis and in cold signaling and cold tolerance. This chain is 3-hydroxyisobutyryl-CoA hydrolase 1 (CHY1), found in Arabidopsis thaliana (Mouse-ear cress).